Reading from the N-terminus, the 473-residue chain is Lipid A galacturonosyltransferase RgtD (473 aa).

10 helical membrane passes run 6-26 (GLLI…FDAT), 68-88 (AIYW…LVLM), 94-114 (FVGP…PGVA), 118-138 (VFFS…LAYF), 160-180 (FLTK…LLLI), 190-210 (VIIA…WNLQ), 238-258 (FFAA…LWAV), 271-291 (KMLV…ATVA), 295-315 (ANWA…LLYL), and 327-347 (INGI…QLLL).

It localises to the cell membrane. The protein operates within bacterial outer membrane biogenesis; LPS lipid A biosynthesis. In terms of biological role, involved in the modification of the lipopolysaccharide (LPS) lipid A moiety. Catalyzes the transfer of a galacturonic acid (GalA) residue to the 4'-position of 4'-dephosphorylated lipid A, using dodecaprenyl phosphate-GalA as the donor substrate. Acts before the other GalA transferases RgtA, RgtB and RgtC. The protein is Lipid A galacturonosyltransferase RgtD of Rhizobium johnstonii (strain DSM 114642 / LMG 32736 / 3841) (Rhizobium leguminosarum bv. viciae).